The following is a 215-amino-acid chain: Riboflavin synthase (215 aa).

Lumazine-binding repeat units follow at residues 1 to 96 (MFTG…FGGH) and 97 to 193 (FVSG…YRFL). Residues 4-6 (GIV), 47-49 (CLT), 61-66 (DVMPET), 100-102 (GHV), K135, 144-146 (SST), and 158-163 (SVIPHT) each bind 2,4-dihydroxypteridine.

In terms of assembly, homotrimer.

The enzyme catalyses 2 6,7-dimethyl-8-(1-D-ribityl)lumazine + H(+) = 5-amino-6-(D-ribitylamino)uracil + riboflavin. Its pathway is cofactor biosynthesis; riboflavin biosynthesis; riboflavin from 2-hydroxy-3-oxobutyl phosphate and 5-amino-6-(D-ribitylamino)uracil: step 2/2. In terms of biological role, catalyzes the dismutation of two molecules of 6,7-dimethyl-8-ribityllumazine, resulting in the formation of riboflavin and 5-amino-6-(D-ribitylamino)uracil. The chain is Riboflavin synthase (ribE) from Bacillus amyloliquefaciens (Bacillus velezensis).